The following is a 475-amino-acid chain: ATP-dependent protease ATPase subunit HslU1 (475 aa).

The transit peptide at 1–27 (MMRRVTSSLPSALKLGRSLGPNVRFSG) directs the protein to the mitochondrion. ATP is bound by residues Ile-66, 108 to 113 (GVGKTE), Asp-286, Glu-353, and Arg-425.

It belongs to the ClpX chaperone family. HslU subfamily. In terms of assembly, a double ring-shaped homohexamer of HslV is capped on each side by a ring-shaped HslU homohexamer. The assembly of the HslU/HslV complex (HslVU) is dependent on binding of ATP.

The protein localises to the mitochondrion matrix. Its subcellular location is the kinetoplast. Functionally, ATPase subunit of a proteasome-like degradation complex; this subunit has chaperone activity. The binding of ATP and its subsequent hydrolysis by HslU are essential for unfolding of protein substrates subsequently hydrolyzed by HslV. HslU recognizes the N-terminal part of its protein substrates and unfolds these before they are guided to HslV for hydrolysis. The HslVU protease complex functions in mitochondrial DNA replication by regulating DNA helicase PIF2 protein levels. The chain is ATP-dependent protease ATPase subunit HslU1 (HslU1) from Trypanosoma brucei brucei (strain 927/4 GUTat10.1).